Consider the following 404-residue polypeptide: CCA-adding enzyme (404 aa).

Residues Gly27 and Arg30 each coordinate ATP. 2 residues coordinate CTP: Gly27 and Arg30. The Mg(2+) site is built by Asp40 and Asp42. ATP-binding residues include Arg111, Asp154, Arg157, Arg160, and Arg163. Residues Arg111, Asp154, Arg157, Arg160, and Arg163 each contribute to the CTP site.

This sequence belongs to the tRNA nucleotidyltransferase/poly(A) polymerase family. Bacterial CCA-adding enzyme type 3 subfamily. Homodimer. Mg(2+) serves as cofactor.

The enzyme catalyses a tRNA precursor + 2 CTP + ATP = a tRNA with a 3' CCA end + 3 diphosphate. The catalysed reaction is a tRNA with a 3' CCA end + 2 CTP + ATP = a tRNA with a 3' CCACCA end + 3 diphosphate. Its function is as follows. Catalyzes the addition and repair of the essential 3'-terminal CCA sequence in tRNAs without using a nucleic acid template. Adds these three nucleotides in the order of C, C, and A to the tRNA nucleotide-73, using CTP and ATP as substrates and producing inorganic pyrophosphate. tRNA 3'-terminal CCA addition is required both for tRNA processing and repair. Also involved in tRNA surveillance by mediating tandem CCA addition to generate a CCACCA at the 3' terminus of unstable tRNAs. While stable tRNAs receive only 3'-terminal CCA, unstable tRNAs are marked with CCACCA and rapidly degraded. This Geobacillus thermodenitrificans (strain NG80-2) protein is CCA-adding enzyme.